A 264-amino-acid polypeptide reads, in one-letter code: Thiazole synthase (264 aa).

Residue lysine 98 is the Schiff-base intermediate with DXP of the active site. Residues glycine 159, 185–186 (AG), and 207–208 (AT) contribute to the 1-deoxy-D-xylulose 5-phosphate site.

It belongs to the ThiG family. As to quaternary structure, homotetramer. Forms heterodimers with either ThiH or ThiS.

It localises to the cytoplasm. The catalysed reaction is [ThiS sulfur-carrier protein]-C-terminal-Gly-aminoethanethioate + 2-iminoacetate + 1-deoxy-D-xylulose 5-phosphate = [ThiS sulfur-carrier protein]-C-terminal Gly-Gly + 2-[(2R,5Z)-2-carboxy-4-methylthiazol-5(2H)-ylidene]ethyl phosphate + 2 H2O + H(+). Its pathway is cofactor biosynthesis; thiamine diphosphate biosynthesis. Functionally, catalyzes the rearrangement of 1-deoxy-D-xylulose 5-phosphate (DXP) to produce the thiazole phosphate moiety of thiamine. Sulfur is provided by the thiocarboxylate moiety of the carrier protein ThiS. In vitro, sulfur can be provided by H(2)S. The sequence is that of Thiazole synthase from Mycobacterium marinum (strain ATCC BAA-535 / M).